Reading from the N-terminus, the 252-residue chain is Chitooligosaccharide deacetylase (252 aa).

Residues His-61 and His-125 each contribute to the Mg(2+) site.

It belongs to the YdjC deacetylase family. ChbG subfamily. In terms of assembly, homodimer. The cofactor is Mg(2+).

It is found in the cytoplasm. The catalysed reaction is N,N'-diacetylchitobiose + H2O = N-acetyl-beta-D-glucosaminyl-(1-&gt;4)-D-glucosamine + acetate. It catalyses the reaction diacetylchitobiose-6'-phosphate + H2O = N'-monoacetylchitobiose-6'-phosphate + acetate. It participates in glycan degradation; chitin degradation. In terms of biological role, involved in the degradation of chitin. ChbG is essential for growth on the acetylated chitooligosaccharides chitobiose and chitotriose but is dispensable for growth on cellobiose and chitosan dimer, the deacetylated form of chitobiose. Deacetylation of chitobiose-6-P and chitotriose-6-P is necessary for both the activation of the chb promoter by the regulatory protein ChbR and the hydrolysis of phosphorylated beta-glucosides by the phospho-beta-glucosidase ChbF. Catalyzes the removal of only one acetyl group from chitobiose-6-P to yield monoacetylchitobiose-6-P, the inducer of ChbR and the substrate of ChbF. This is Chitooligosaccharide deacetylase from Enterobacter sp. (strain 638).